The following is a 175-amino-acid chain: Alkyl hydroperoxide reductase AhpD (175 aa).

The active-site Proton donor is the Cys131. Cys131 and Cys134 are joined by a disulfide. Cys134 (cysteine sulfenic acid (-SOH) intermediate) is an active-site residue.

The protein belongs to the AhpD family.

It catalyses the reaction N(6)-[(R)-dihydrolipoyl]-L-lysyl-[lipoyl-carrier protein] + a hydroperoxide = N(6)-[(R)-lipoyl]-L-lysyl-[lipoyl-carrier protein] + an alcohol + H2O. Its function is as follows. Antioxidant protein with alkyl hydroperoxidase activity. Required for the reduction of the AhpC active site cysteine residues and for the regeneration of the AhpC enzyme activity. The sequence is that of Alkyl hydroperoxide reductase AhpD from Brucella melitensis biotype 1 (strain ATCC 23456 / CCUG 17765 / NCTC 10094 / 16M).